The chain runs to 308 residues: Maspardin (308 aa).

Residues 87 to 159 (FCDGFRKLLD…NSFWLMPAFM (73 aa)) form the AB hydrolase-1 domain. Ser-304 is modified (phosphoserine).

This sequence belongs to the AB hydrolase superfamily. As to quaternary structure, interacts with CD4. Interacts with ALDH16A1.

The protein localises to the cytoplasm. In terms of biological role, may play a role as a negative regulatory factor in CD4-dependent T-cell activation. In Pongo abelii (Sumatran orangutan), this protein is Maspardin (SPG21).